We begin with the raw amino-acid sequence, 123 residues long: Large ribosomal subunit protein bL17 (123 aa).

This sequence belongs to the bacterial ribosomal protein bL17 family. In terms of assembly, part of the 50S ribosomal subunit. Contacts protein L32.

The sequence is that of Large ribosomal subunit protein bL17 from Mycoplasma genitalium (strain ATCC 33530 / DSM 19775 / NCTC 10195 / G37) (Mycoplasmoides genitalium).